Reading from the N-terminus, the 358-residue chain is Acyl-CoA Delta-12 desaturase (358 aa).

2 helical membrane passes run 30-50 (IILY…AMFY) and 55-75 (TVFY…AGSH). The Fe cation site is built by H75, H80, H112, H115, and H116. Residues 75-80 (HRLWAH) carry the Histidine box-1 motif. A Histidine box-2 motif is present at residues 112–116 (HRVHH). The next 2 helical transmembrane spans lie at 175–195 (TFFA…YFWG) and 200–220 (TAFF…TFLV). Fe cation is bound by residues H225, H254, H257, and H258. The Histidine box-3 signature appears at 254-258 (HNYHH).

This sequence belongs to the fatty acid desaturase type 1 family. The cofactor is Fe(2+).

It localises to the membrane. The enzyme catalyses (9Z)-octadecenoyl-CoA + 2 Fe(II)-[cytochrome b5] + O2 + 2 H(+) = (9Z,12Z)-octadecadienoyl-CoA + 2 Fe(III)-[cytochrome b5] + 2 H2O. It catalyses the reaction (9Z)-hexadecenoyl-CoA + 2 Fe(II)-[cytochrome b5] + O2 + 2 H(+) = (9Z,12Z)-hexadecadienoyl-CoA + 2 Fe(III)-[cytochrome b5] + 2 H2O. Catalyzes the formation of a Delta12 double bond, acting on monounsaturated fatty acyl substrates like palmitoleoyl-CoA ((9Z)-hexadecenoyl-CoA) and oleoyl-CoA ((9Z)-octadecenoyl-CoA) with higher desaturation activity on (9Z)-octadecenoyl-CoA than (9Z)-hexadecenoyl-CoA. Requires preexisting cis double bond at the Delta9 position of fatty acyls to be able to insert the Delta12 double bond. Delta12-desaturation of (9Z)-octadecenoyl-CoA in insects produces (9Z,12Z)-octadecadienoyl-CoA (linoleoyl-CoA) which may be used to supply precursors of crucial mediators of immunity and reproduction and other essential functions. The chain is Acyl-CoA Delta-12 desaturase from Tribolium castaneum (Red flour beetle).